Reading from the N-terminus, the 66-residue chain is Beta-toxin Chui3 (66 aa).

The 66-residue stretch at 1 to 66 folds into the LCN-type CS-alpha/beta domain; sequence KEGYLVELGT…VWPLKNKTCR (66 aa). 4 disulfides stabilise this stretch: cysteine 12-cysteine 65, cysteine 16-cysteine 41, cysteine 25-cysteine 46, and cysteine 29-cysteine 48.

The protein belongs to the long (4 C-C) scorpion toxin superfamily. Sodium channel inhibitor family. Beta subfamily. As to expression, expressed by the venom gland.

Its subcellular location is the secreted. Beta toxins bind voltage-independently at site-4 of sodium channels (Nav) and shift the voltage of activation toward more negative potentials thereby affecting sodium channel activation and promoting spontaneous and repetitive firing. Acts on human sodium channel Nav1.6/SCN8A. The polypeptide is Beta-toxin Chui3 (Centruroides huichol (Scorpion)).